A 284-amino-acid polypeptide reads, in one-letter code: 2-dehydro-3-deoxyphosphooctonate aldolase (284 aa).

Belongs to the KdsA family.

The protein resides in the cytoplasm. It catalyses the reaction D-arabinose 5-phosphate + phosphoenolpyruvate + H2O = 3-deoxy-alpha-D-manno-2-octulosonate-8-phosphate + phosphate. The protein operates within carbohydrate biosynthesis; 3-deoxy-D-manno-octulosonate biosynthesis; 3-deoxy-D-manno-octulosonate from D-ribulose 5-phosphate: step 2/3. It functions in the pathway bacterial outer membrane biogenesis; lipopolysaccharide biosynthesis. The chain is 2-dehydro-3-deoxyphosphooctonate aldolase from Photorhabdus laumondii subsp. laumondii (strain DSM 15139 / CIP 105565 / TT01) (Photorhabdus luminescens subsp. laumondii).